The primary structure comprises 122 residues: MIQQESRLKVADNTGAKEILCIRVLGGSSRRYAGIGDVIVATVKDAIPGGNVKRGDVVKAVVVRTAKERRRADGSYIKFDENAAVIIKNDNDPRGTRIFGPVGRELREKKFMKIVSLAPEVL.

The protein belongs to the universal ribosomal protein uL14 family. Part of the 50S ribosomal subunit. Forms a cluster with proteins L3 and L19. In the 70S ribosome, L14 and L19 interact and together make contacts with the 16S rRNA in bridges B5 and B8.

Functionally, binds to 23S rRNA. Forms part of two intersubunit bridges in the 70S ribosome. The chain is Large ribosomal subunit protein uL14 from Mycolicibacterium vanbaalenii (strain DSM 7251 / JCM 13017 / BCRC 16820 / KCTC 9966 / NRRL B-24157 / PYR-1) (Mycobacterium vanbaalenii).